Reading from the N-terminus, the 1122-residue chain is Cytosolic carboxypeptidase 4 (1122 aa).

Residues 287–338 are disordered; it reads PGSTSSELPLNLTEEDFDDDGDEEMDKDSDVEAVKEDDDLETDLSKLSSKPG. A compositionally biased stretch (acidic residues) spans 299-313; it reads TEEDFDDDGDEEMDK. In terms of domain architecture, Peptidase M14 spans 731–1021; sequence YPYTYSTLMT…MYCLGLLILE (291 aa). Residues His803, Glu806, and His900 each coordinate Zn(2+). The Proton donor/acceptor role is filled by Glu985. Positions 1099-1122 are disordered; it reads CALNKDEEEEEKEEGTGWRRRSVT.

This sequence belongs to the peptidase M14 family. As to quaternary structure, interacts with MYLK. Interacts with TCF4. Requires Zn(2+) as cofactor. Widely expressed at low level. Expressed in eye, muscle, pituitary, testis and to a lower extent in brain.

The protein resides in the cytoplasm. It is found in the cytosol. It catalyses the reaction (L-glutamyl)(n+1)-gamma-L-glutamyl-L-glutamyl-[protein] + H2O = (L-glutamyl)(n)-gamma-L-glutamyl-L-glutamyl-[protein] + L-glutamate. It carries out the reaction C-terminal L-alpha-aminoacyl-L-glutamyl-L-glutamyl-[tubulin] + H2O = C-terminal L-alpha-aminoacyl-L-glutamyl-[tubulin] + L-glutamate. In terms of biological role, metallocarboxypeptidase that mediates deglutamylation of tubulin and non-tubulin target proteins. Catalyzes the removal of polyglutamate side chains present on the gamma-carboxyl group of glutamate residues within the C-terminal tail of tubulin protein. Specifically cleaves tubulin long-side-chains, while it is not able to remove the branching point glutamate. Also catalyzes the removal of polyglutamate residues from the carboxy-terminus of non-tubulin proteins such as MYLK. The polypeptide is Cytosolic carboxypeptidase 4 (Mus musculus (Mouse)).